The following is a 200-amino-acid chain: Probable GTP-binding protein EngB (200 aa).

Residues 22-199 (GLDEIALAGR…KDWIQARLYE (178 aa)) form the EngB-type G domain. Residues 30–37 (GRSNVGKS), 57–61 (GKTQT), 78–81 (DVPG), 145–148 (TKMD), and 178–180 (FSS) contribute to the GTP site. Residues Ser37 and Thr59 each coordinate Mg(2+).

It belongs to the TRAFAC class TrmE-Era-EngA-EngB-Septin-like GTPase superfamily. EngB GTPase family. It depends on Mg(2+) as a cofactor.

In terms of biological role, necessary for normal cell division and for the maintenance of normal septation. This Lactobacillus delbrueckii subsp. bulgaricus (strain ATCC 11842 / DSM 20081 / BCRC 10696 / JCM 1002 / NBRC 13953 / NCIMB 11778 / NCTC 12712 / WDCM 00102 / Lb 14) protein is Probable GTP-binding protein EngB.